The primary structure comprises 768 residues: Solabiose phosphorylase (768 aa).

Asp456 functions as the Proton donor in the catalytic mechanism.

Belongs to the glycosyl hydrolase 94 family.

The enzyme catalyses solabiose + phosphate = D-galactose + alpha-D-glucose 1-phosphate. Functionally, catalyzes the reversible phosphorolysis of solabiose. Catalyzes the phosphorolysis and synthesis of solabiose through a sequential bi-bi mechanism involving the formation of a ternary complex. Is probably involved in the metabolism of solabiose released from solabiose-containing compounds. This is Solabiose phosphorylase from Paenibacillus borealis.